Here is an 837-residue protein sequence, read N- to C-terminus: Striatin-interacting protein 1 (837 aa).

Position 1 is an N-acetylmethionine (M1). 2 disordered regions span residues 1 to 66 (MEPA…SESP) and 333 to 423 (AASP…KGLP). Over residues 18–35 (PQPPPPPPPATAQPPPGA) the composition is skewed to pro residues. A compositionally biased stretch (basic and acidic residues) spans 47–60 (KAREFNRNQRKDSE). Phosphoserine occurs at positions 59, 335, and 339. The span at 356–377 (KALIKQDNLDAFNERDPYKADD) shows a compositional bias: basic and acidic residues. Residues 378–391 (SREEEEENDDDNSL) show a composition bias toward acidic residues. A Phosphoserine modification is found at S788. Positions 796–837 (DNCLQSVLGQRVDLPEDFQMNYDLWLEREVFSKPISWEELLQ) are required for STRIPAK core complex formation.

Belongs to the STRIP family. As to quaternary structure, part of the core of STRIPAK complexes composed of PP2A catalytic and scaffolding subunits, the striatins (PP2A regulatory subunits), the striatin-associated proteins MOB4, STRIP1 and STRIP2, PDCD10 and members of the STE20 kinases, such as STK24 and STK26. The STRIPAK complex can be extended by adapter proteins such as SLMAP:SIKE1, CTTNBP2 or CTTNBP2NL. Interacts with CDC42BPB. Interacts with CTTNBP2NL.

The protein localises to the cytoplasm. Plays a role in the regulation of cell morphology and cytoskeletal organization. Required in the cortical actin filament dynamics and cell shape. Part of the striatin-interacting phosphatase and kinase (STRIPAK) complexes. STRIPAK complexes have critical roles in protein (de)phosphorylation and are regulators of multiple signaling pathways including Hippo, MAPK, nuclear receptor and cytoskeleton remodeling. Different types of STRIPAK complexes are involved in a variety of biological processes such as cell growth, differentiation, apoptosis, metabolism and immune regulation. This is Striatin-interacting protein 1 (STRIP1) from Macaca fascicularis (Crab-eating macaque).